A 377-amino-acid polypeptide reads, in one-letter code: MKISQLAQLTQASTCPRLVVKVGSALLVGKDGEPRREWLSALVSEIAAMRAAGQEVIVVSSGAIALGARKLGLAKGGRGSLSDAQAAASVGQIALAGLWAELLAQHGLTAAQILLTLEDLEDRRRYLNVTATLGTLLAACAVPVINENDSVATQEIRFGDNDRLAARVGQAAGASGVLLLSDIDGLYDRDPRQPGATRIPVVKGVTPEIHAMATGGSSSGLGSGGMTSKLQAAEIAELAGMALAIIDGQPVAPIAAAMGAARGTLFLPRGRKQARKAWLGGRMRMRGSVQVDAGAAAALARGSSLLAAGVTEVDGDFQRGDAIAVLGPDGRTLARGLSEYDAAECARLKGRHSREHEELLGYAPRSALIHRDQMVLL.

Lys-21 contributes to the ATP binding site. 3 residues coordinate substrate: Ser-61, Asp-149, and Asn-161. Residues 181–182 (SD) and 223–229 (SGGMTSK) each bind ATP. In terms of domain architecture, PUA spans 286–363 (RGSVQVDAGA…REHEELLGYA (78 aa)).

This sequence belongs to the glutamate 5-kinase family.

The protein resides in the cytoplasm. The enzyme catalyses L-glutamate + ATP = L-glutamyl 5-phosphate + ADP. It participates in amino-acid biosynthesis; L-proline biosynthesis; L-glutamate 5-semialdehyde from L-glutamate: step 1/2. Its function is as follows. Catalyzes the transfer of a phosphate group to glutamate to form L-glutamate 5-phosphate. The sequence is that of Glutamate 5-kinase from Novosphingobium aromaticivorans (strain ATCC 700278 / DSM 12444 / CCUG 56034 / CIP 105152 / NBRC 16084 / F199).